Reading from the N-terminus, the 422-residue chain is Glutamate-1-semialdehyde 2,1-aminomutase (422 aa).

K264 carries the post-translational modification N6-(pyridoxal phosphate)lysine.

This sequence belongs to the class-III pyridoxal-phosphate-dependent aminotransferase family. HemL subfamily. In terms of assembly, homodimer. Pyridoxal 5'-phosphate serves as cofactor.

The protein localises to the cytoplasm. It catalyses the reaction (S)-4-amino-5-oxopentanoate = 5-aminolevulinate. It participates in porphyrin-containing compound metabolism; protoporphyrin-IX biosynthesis; 5-aminolevulinate from L-glutamyl-tRNA(Glu): step 2/2. The protein is Glutamate-1-semialdehyde 2,1-aminomutase of Clostridium acetobutylicum (strain ATCC 824 / DSM 792 / JCM 1419 / IAM 19013 / LMG 5710 / NBRC 13948 / NRRL B-527 / VKM B-1787 / 2291 / W).